Reading from the N-terminus, the 214-residue chain is Adenylate kinase (214 aa).

10–15 contacts ATP; it reads GAGKGT. The interval 30–59 is NMP; sequence STGDMFREEISAKSELGRKVEDILKRGELV. AMP contacts are provided by residues threonine 31, arginine 36, 57–59, 85–88, and glutamine 92; these read ELV and GYPR. The segment at 126 to 163 is LID; that stretch reads NRRICKNCGKIYNLITLPPKINGKCDVCGGELYQREDD. Arginine 127 serves as a coordination point for ATP. Zn(2+) contacts are provided by cysteine 130 and cysteine 133. Residue 136-137 participates in ATP binding; sequence IY. The Zn(2+) site is built by cysteine 150 and cysteine 153. AMP contacts are provided by arginine 160 and arginine 171. Residue methionine 199 coordinates ATP.

Belongs to the adenylate kinase family. In terms of assembly, monomer.

It is found in the cytoplasm. The catalysed reaction is AMP + ATP = 2 ADP. It participates in purine metabolism; AMP biosynthesis via salvage pathway; AMP from ADP: step 1/1. Functionally, catalyzes the reversible transfer of the terminal phosphate group between ATP and AMP. Plays an important role in cellular energy homeostasis and in adenine nucleotide metabolism. This chain is Adenylate kinase, found in Thermosipho melanesiensis (strain DSM 12029 / CIP 104789 / BI429).